The chain runs to 367 residues: UDP-N-acetylglucosamine--N-acetylmuramyl-(pentapeptide) pyrophosphoryl-undecaprenol N-acetylglucosamine transferase (367 aa).

UDP-N-acetyl-alpha-D-glucosamine-binding positions include 11–13, Asn-125, Arg-163, Ser-197, and Gln-289; that span reads TAG.

Belongs to the glycosyltransferase 28 family. MurG subfamily.

The protein resides in the cell membrane. It catalyses the reaction di-trans,octa-cis-undecaprenyl diphospho-N-acetyl-alpha-D-muramoyl-L-alanyl-D-glutamyl-meso-2,6-diaminopimeloyl-D-alanyl-D-alanine + UDP-N-acetyl-alpha-D-glucosamine = di-trans,octa-cis-undecaprenyl diphospho-[N-acetyl-alpha-D-glucosaminyl-(1-&gt;4)]-N-acetyl-alpha-D-muramoyl-L-alanyl-D-glutamyl-meso-2,6-diaminopimeloyl-D-alanyl-D-alanine + UDP + H(+). It functions in the pathway cell wall biogenesis; peptidoglycan biosynthesis. Functionally, cell wall formation. Catalyzes the transfer of a GlcNAc subunit on undecaprenyl-pyrophosphoryl-MurNAc-pentapeptide (lipid intermediate I) to form undecaprenyl-pyrophosphoryl-MurNAc-(pentapeptide)GlcNAc (lipid intermediate II). The chain is UDP-N-acetylglucosamine--N-acetylmuramyl-(pentapeptide) pyrophosphoryl-undecaprenol N-acetylglucosamine transferase from Clavibacter michiganensis subsp. michiganensis (strain NCPPB 382).